We begin with the raw amino-acid sequence, 692 residues long: Putative receptor-like protein kinase At1g80870 (692 aa).

The helical transmembrane segment at 20 to 40 threads the bilayer; sequence LFLILTISSSLVIFFAILYFI. A Protein kinase domain is found at 81 to 673; that stretch reads FDESNVIGKG…GEMDISSTAF (593 aa). Residues 87 to 95 and Lys-109 contribute to the ATP site; that span reads IGKGGSGTV. Residue Asp-206 is the Proton acceptor of the active site. Disordered stretches follow at residues 427–446 and 511–533; these read EISERKNKRSKNKKKKHRNM and RRKSNSSSKKKKKNNNGSMGSEM. Composition is skewed to basic residues over residues 432-444 and 511-524; these read KNKRSKNKKKKHR and RRKSNSSSKKKKKN.

Belongs to the protein kinase superfamily. Ser/Thr protein kinase family.

Its subcellular location is the cell membrane. The enzyme catalyses L-seryl-[protein] + ATP = O-phospho-L-seryl-[protein] + ADP + H(+). It catalyses the reaction L-threonyl-[protein] + ATP = O-phospho-L-threonyl-[protein] + ADP + H(+). The protein is Putative receptor-like protein kinase At1g80870 of Arabidopsis thaliana (Mouse-ear cress).